We begin with the raw amino-acid sequence, 94 residues long: Co-chaperonin GroES (94 aa).

This sequence belongs to the GroES chaperonin family. In terms of assembly, heptamer of 7 subunits arranged in a ring. Interacts with the chaperonin GroEL.

The protein localises to the cytoplasm. Its function is as follows. Together with the chaperonin GroEL, plays an essential role in assisting protein folding. The GroEL-GroES system forms a nano-cage that allows encapsulation of the non-native substrate proteins and provides a physical environment optimized to promote and accelerate protein folding. GroES binds to the apical surface of the GroEL ring, thereby capping the opening of the GroEL channel. The sequence is that of Co-chaperonin GroES from Bacillus sp. (strain PS3).